The primary structure comprises 327 residues: Spermidine/putrescine import ATP-binding protein PotA (327 aa).

One can recognise an ABC transporter domain in the interval 5–235; it reads IKVEAVEKHF…PKTLFVATFI (231 aa). ATP is bound at residue 37–44; it reads GPSGCGKT.

This sequence belongs to the ABC transporter superfamily. Spermidine/putrescine importer (TC 3.A.1.11.1) family. In terms of assembly, the complex is composed of two ATP-binding proteins (PotA), two transmembrane proteins (PotB and PotC) and a solute-binding protein (PotD).

The protein resides in the cell membrane. It catalyses the reaction ATP + H2O + polyamine-[polyamine-binding protein]Side 1 = ADP + phosphate + polyamineSide 2 + [polyamine-binding protein]Side 1.. In terms of biological role, part of the ABC transporter complex PotABCD involved in spermidine/putrescine import. Responsible for energy coupling to the transport system. The polypeptide is Spermidine/putrescine import ATP-binding protein PotA (Bacillus cereus (strain ATCC 14579 / DSM 31 / CCUG 7414 / JCM 2152 / NBRC 15305 / NCIMB 9373 / NCTC 2599 / NRRL B-3711)).